The chain runs to 673 residues: Kinesin-like protein KIFC1 (673 aa).

Phosphoserine is present on residues S6, S26, S31, and S33. 2 disordered regions span residues 23–94 (KAPS…TGPR) and 109–136 (VPAVPVQKSGTSGVPPMAGGKKPSKRPA). Residues 60-86 (TKITTSHPRVPSLTTVPQTQGQTTAQK) are compositionally biased toward polar residues. A coiled-coil region spans residues 142 to 306 (QLCDLNAELK…RRRLHNQLQE (165 aa)). In terms of domain architecture, Kinesin motor spans 310–663 (NIRVFCRVRP…LRFASKVNQC (354 aa)). The tract at residues 325 to 372 (PTPPPGLLLFPSGPGGPSDPPTRLSLSRSDERRGTLSGAPAPPTRHDF) is disordered. T359 is modified (phosphothreonine). 410–417 (GQTGSGKT) provides a ligand contact to ATP.

This sequence belongs to the TRAFAC class myosin-kinesin ATPase superfamily. Kinesin family. NCD subfamily. Binds NUBP1 and NUBP2. Interacts with PPP1R42.

The protein localises to the nucleus. It localises to the cytoplasm. It is found in the cytoskeleton. Its subcellular location is the microtubule organizing center. The protein resides in the centrosome. The protein localises to the spindle. It localises to the early endosome. Functionally, minus end-directed microtubule-dependent motor required for bipolar spindle formation. May contribute to movement of early endocytic vesicles. Regulates cilium formation and structure. The chain is Kinesin-like protein KIFC1 (KIFC1) from Homo sapiens (Human).